The sequence spans 108 residues: uncharacterized protein (108 aa).

The region spanning 20-74 (VRQRRTALILDQETLARRIGVSFQQIQKYERGRNRISASRLYDIAKALAVPIDYF) is the HTH cro/C1-type domain. A DNA-binding region (H-T-H motif) is located at residues 31–50 (QETLARRIGVSFQQIQKYER).

This is an uncharacterized protein from Rhodospirillum rubrum.